A 147-amino-acid chain; its full sequence is Large ribosomal subunit protein uL23A (147 aa).

Residues 1–10 show a composition bias toward low complexity; that stretch reads MAPSAPAKTA. Residues 1–29 are disordered; the sequence is MAPSAPAKTAKALDAKKKVVKGKRTTHRR. Residues 18–29 show a composition bias toward basic residues; sequence KVVKGKRTTHRR.

The protein belongs to the universal ribosomal protein uL23 family.

Its function is as follows. This protein binds to a specific region on the 26S rRNA. This is Large ribosomal subunit protein uL23A from Caenorhabditis elegans.